The sequence spans 1045 residues: Endoglucanase B (1045 aa).

The signal sequence occupies residues 1–33; that stretch reads MLRQVPRTLVAGGSALAVAVGVLVAPLATGAAA. Residues 34–492 are catalytic; it reads APTYNYAEAL…LASFPTPEQP (459 aa). Asp91 acts as the Nucleophile in catalysis. Active-site residues include His410, Asp449, and Glu458. In terms of domain architecture, CBM3 spans 493-642; that stretch reads DGDQLFVEAM…STLVWGKEPT (150 aa). 4 linker ('hinge') (Pro-Thr box) regions span residues 644–650, 734–748, 831–846, and 931–944; these read TTTDTTP, AAVTFTTDTTGETEP, APVTFTTAAPPVDTVA, and SPVTFTTLPVTSTP. 3 Fibronectin type-III domains span residues 653-743, 751-840, and 849-940; these read TPGT…TDTT, TPGT…TAAP, and VPGT…TLPV. In terms of domain architecture, CBM2 spans 939 to 1045; the sequence is PVTSTPSCTV…SFTVNGEVCG (107 aa). The cysteines at positions 946 and 1044 are disulfide-linked.

It belongs to the glycosyl hydrolase 9 (cellulase E) family.

The catalysed reaction is Endohydrolysis of (1-&gt;4)-beta-D-glucosidic linkages in cellulose, lichenin and cereal beta-D-glucans.. Functionally, the biological conversion of cellulose to glucose generally requires three types of hydrolytic enzymes: (1) Endoglucanases which cut internal beta-1,4-glucosidic bonds; (2) Exocellobiohydrolases that cut the disaccharide cellobiose from the non-reducing end of the cellulose polymer chain; (3) Beta-1,4-glucosidases which hydrolyze the cellobiose and other short cello-oligosaccharides to glucose. The protein is Endoglucanase B (cenB) of Cellulomonas fimi.